Consider the following 117-residue polypeptide: Putative iron-sulfur cluster insertion protein ErpA (117 aa).

Positions 45, 109, and 111 each coordinate iron-sulfur cluster.

Belongs to the HesB/IscA family. As to quaternary structure, homodimer. Iron-sulfur cluster serves as cofactor.

Its function is as follows. Required for insertion of 4Fe-4S clusters. This Methylobacillus flagellatus (strain ATCC 51484 / DSM 6875 / VKM B-1610 / KT) protein is Putative iron-sulfur cluster insertion protein ErpA.